We begin with the raw amino-acid sequence, 376 residues long: MAIKVLVVDDSSFFRRRVSEIINAESRLEVIDVAVNGKEAVEKAKRLKPDVITMDIEMPVMDGISAVREIMASVPTPILMFSSLTHDGAKATLDALDAGALDFLPKKFEDIARNRDEAVSLLQQRVIQIASKRAFMRRPVASSTPVQERPQSTLNRPTTGLRREASAQAPVSRAPVAAKFRASGKKYQLTAIGTSTGGPVALQKILTKLPANYPHPIVLIQHMPATFTAAFASRLNSLCKIQVKEAEDGDVLQAGVAYLAPGGKQMMIDGRPGAARLRIIDGGERMNYKPCVDVTFGSAAKIYADKVLSMVLTGMGADGREGARMLKSAGATIWAQDEDSCVVYGMPQAVAKAGLSTEDLPLERIAERMLVEVGLA.

Positions 4-121 constitute a Response regulatory domain; it reads KVLVVDDSSF…ARNRDEAVSL (118 aa). 4-aspartylphosphate is present on Asp55. The interval 138-169 is disordered; the sequence is RPVASSTPVQERPQSTLNRPTTGLRREASAQA. Polar residues predominate over residues 141 to 158; sequence ASSTPVQERPQSTLNRPT. The region spanning 183 to 376 is the CheB-type methylesterase domain; it reads SGKKYQLTAI…ERMLVEVGLA (194 aa). Residues Ser195, His222, and Asp318 contribute to the active site.

This sequence belongs to the CheB family. Post-translationally, phosphorylated by CheA. Phosphorylation of the N-terminal regulatory domain activates the methylesterase activity.

The protein localises to the cytoplasm. It carries out the reaction [protein]-L-glutamate 5-O-methyl ester + H2O = L-glutamyl-[protein] + methanol + H(+). The enzyme catalyses L-glutaminyl-[protein] + H2O = L-glutamyl-[protein] + NH4(+). Its function is as follows. Involved in chemotaxis. Part of a chemotaxis signal transduction system that modulates chemotaxis in response to various stimuli. Catalyzes the demethylation of specific methylglutamate residues introduced into the chemoreceptors (methyl-accepting chemotaxis proteins or MCP) by CheR. Also mediates the irreversible deamidation of specific glutamine residues to glutamic acid. The sequence is that of Protein-glutamate methylesterase/protein-glutamine glutaminase 1 from Vibrio vulnificus (strain YJ016).